A 106-amino-acid polypeptide reads, in one-letter code: 3-phenylpropionate/cinnamic acid dioxygenase ferredoxin subunit (106 aa).

A Rieske domain is found at 4–99 (IYACPVADVP…VHVEGGDIFI (96 aa)). [2Fe-2S] cluster contacts are provided by Cys42, His44, Cys62, and His65.

This sequence belongs to the bacterial ring-hydroxylating dioxygenase ferredoxin component family. This dioxygenase system consists of four proteins: the two subunits of the hydroxylase component (HcaE and HcaF), a ferredoxin (HcaC) and a ferredoxin reductase (HcaD). Requires [2Fe-2S] cluster as cofactor.

Its pathway is aromatic compound metabolism; 3-phenylpropanoate degradation. Functionally, part of the multicomponent 3-phenylpropionate dioxygenase, that converts 3-phenylpropionic acid (PP) and cinnamic acid (CI) into 3-phenylpropionate-dihydrodiol (PP-dihydrodiol) and cinnamic acid-dihydrodiol (CI-dihydrodiol), respectively. This protein seems to be a 2Fe-2S ferredoxin. This chain is 3-phenylpropionate/cinnamic acid dioxygenase ferredoxin subunit, found in Escherichia coli O139:H28 (strain E24377A / ETEC).